Consider the following 479-residue polypeptide: Polyadenylate-binding protein-interacting protein 1 (479 aa).

Residues 1–114 are disordered; it reads MSDGFDRAPG…PQQNSESAMA (114 aa). Residue Ser2 is modified to N-acetylalanine. The span at 11–33 shows a compositional bias: gly residues; sequence AGRGRSRGLGRGGGGPEGGGFPN. The residue at position 21 (Arg21) is an Omega-N-methylarginine. The segment covering 45–69 has biased composition (pro residues); sequence PPQPKAPGFLQPPPLRQPRTTPPPG. A compositionally biased stretch (polar residues) spans 98 to 111; sequence PSSQDKIPQQNSES. A PABPC1-interacting motif-2 (PAM2) region spans residues 116–143; the sequence is PQVVVAPVLMSKLSVNAPEFYPSGYSSS. Residues 157 to 375 are PAIP1 middle domain (PAIP1M); that stretch reads TLSEYVQDFL…LLKLVELRSS (219 aa). One can recognise an MIF4G domain in the interval 159–376; the sequence is SEYVQDFLNH…LKLVELRSSN (218 aa). Residues 435–455 form a disordered region; that stretch reads DYEENGTDLSGAGDPYLDDID. Positions 440 to 479 are PABPC1-interacting motif-1 (PAM1); sequence GTDLSGAGDPYLDDIDDEMDPEIEEAYEKFCLESERKRKQ.

As to quaternary structure, interacts with the RRM1-RRM2 and C-terminus regions of PABPC1 in a 1:1 stoichiometry. Interacts with EIF4A. (Microbial infection) Interacts (via PAIP1M) with human SARS coronaviruses SARS-COV and SARS-COV-2 NSP3 protein (via SARS-unique domain); the interaction increases binding affinity with PABPC1.

The protein localises to the cytoplasm. In terms of biological role, acts as a coactivator in the regulation of translation initiation of poly(A)-containing mRNAs. Its stimulatory activity on translation is mediated via its action on PABPC1. Competes with PAIP2 for binding to PABPC1. Its association with EIF4A and PABPC1 may potentiate contacts between mRNA termini. May also be involved in translationally coupled mRNA turnover. Implicated with other RNA-binding proteins in the cytoplasmic deadenylation/translational and decay interplay of the FOS mRNA mediated by the major coding-region determinant of instability (mCRD) domain. Its function is as follows. (Microbial infection) Upon interaction with SARS coronavirus SARS-CoV NSP3 protein, plays an important role in viral protein synthesis. This Homo sapiens (Human) protein is Polyadenylate-binding protein-interacting protein 1.